A 400-amino-acid chain; its full sequence is Subtilisin-like protease 7 (400 aa).

The first 20 residues, 1–20 (MGFITKAIPLALAAASVING), serve as a signal peptide directing secretion. A propeptide spanning residues 21 to 119 (AEILETRAGV…IERDARVQIN (99 aa)) is cleaved from the precursor. The 83-residue stretch at 36-118 (KYIVVMNDGI…YIERDARVQI (83 aa)) folds into the Inhibitor I9 domain. One can recognise a Peptidase S8 domain in the interval 129–400 (SWGLARVGSK…SKLINNGSGM (272 aa)). Residues Asp-161 and His-192 each act as charge relay system in the active site. Asn-252 is a glycosylation site (N-linked (GlcNAc...) asparagine). Ser-346 serves as the catalytic Charge relay system. A glycan (N-linked (GlcNAc...) asparagine) is linked at Asn-396.

It belongs to the peptidase S8 family.

The protein resides in the secreted. In terms of biological role, secreted subtilisin-like serine protease with keratinolytic activity that contributes to pathogenicity. In Trichophyton violaceum, this protein is Subtilisin-like protease 7 (SUB7).